We begin with the raw amino-acid sequence, 216 residues long: UPF0548 protein (216 aa).

The protein belongs to the UPF0548 family.

This is UPF0548 protein from Dictyostelium discoideum (Social amoeba).